We begin with the raw amino-acid sequence, 428 residues long: Serine hydroxymethyltransferase (428 aa).

120–122 (GHI) is a (6S)-5,6,7,8-tetrahydrofolate binding site. Position 226 is an N6-(pyridoxal phosphate)lysine (lysine 226).

This sequence belongs to the SHMT family. Homodimer. It depends on pyridoxal 5'-phosphate as a cofactor.

The protein resides in the cytoplasm. The enzyme catalyses 5,10-methylenetetrahydromethanopterin + glycine + H2O = 5,6,7,8-tetrahydromethanopterin + L-serine. It participates in amino-acid biosynthesis; glycine biosynthesis; glycine from L-serine: step 1/1. Catalyzes the reversible interconversion of serine and glycine with tetrahydromethanopterin (H4MPT) serving as the one-carbon carrier. Also exhibits a pteridine-independent aldolase activity toward beta-hydroxyamino acids, producing glycine and aldehydes, via a retro-aldol mechanism. The sequence is that of Serine hydroxymethyltransferase from Methanopyrus kandleri (strain AV19 / DSM 6324 / JCM 9639 / NBRC 100938).